Reading from the N-terminus, the 305-residue chain is Homoserine O-acetyltransferase (305 aa).

The Acyl-thioester intermediate role is filled by Cys142. Substrate is bound by residues Lys163 and Ser192. His235 functions as the Proton acceptor in the catalytic mechanism. Residue Glu237 is part of the active site. Arg249 lines the substrate pocket.

It belongs to the MetA family.

It is found in the cytoplasm. The catalysed reaction is L-homoserine + acetyl-CoA = O-acetyl-L-homoserine + CoA. It participates in amino-acid biosynthesis; L-methionine biosynthesis via de novo pathway; O-acetyl-L-homoserine from L-homoserine: step 1/1. In terms of biological role, transfers an acetyl group from acetyl-CoA to L-homoserine, forming acetyl-L-homoserine. The sequence is that of Homoserine O-acetyltransferase from Dinoroseobacter shibae (strain DSM 16493 / NCIMB 14021 / DFL 12).